The sequence spans 193 residues: Recombination protein RecR (193 aa).

Residues 61 to 76 (CASCNALSETEVSEIC) form a C4-type; degenerate zinc finger. In terms of domain architecture, Toprim spans 84 to 170 (SQLCMVLHPR…TFTKIAQGVP (87 aa)).

Belongs to the RecR family.

In terms of biological role, may play a role in DNA repair. It seems to be involved in an RecBC-independent recombinational process of DNA repair. It may act with RecF and RecO. The chain is Recombination protein RecR from Helicobacter pylori (strain J99 / ATCC 700824) (Campylobacter pylori J99).